The chain runs to 252 residues: 3-dehydroquinate dehydratase (252 aa).

Residues S21, 46-48, and R82 each bind 3-dehydroquinate; that span reads EWR. Catalysis depends on H143, which acts as the Proton donor/acceptor. Residue K170 is the Schiff-base intermediate with substrate of the active site. The 3-dehydroquinate site is built by R213, S232, and Q236.

This sequence belongs to the type-I 3-dehydroquinase family. Homodimer.

It catalyses the reaction 3-dehydroquinate = 3-dehydroshikimate + H2O. Its pathway is metabolic intermediate biosynthesis; chorismate biosynthesis; chorismate from D-erythrose 4-phosphate and phosphoenolpyruvate: step 3/7. Functionally, involved in the third step of the chorismate pathway, which leads to the biosynthesis of aromatic amino acids. Catalyzes the cis-dehydration of 3-dehydroquinate (DHQ) and introduces the first double bond of the aromatic ring to yield 3-dehydroshikimate. This is 3-dehydroquinate dehydratase from Shigella flexneri serotype 5b (strain 8401).